The following is a 78-amino-acid chain: Calcium/calmodulin-dependent protein kinase II inhibitor 1 (78 aa).

The segment at 41–68 (NKRPPKLGQIGRSKRVVIEDDRIDDVLK) is CAMK2 inhibitory domain.

It belongs to the CAMK2N family. Interacts with CAMK2B; the presence of Ca(2+)/calmodulin increases the interaction but is not essential. Interacts with CAMK2A; this interaction requires CAMK2A activation by Ca(2+).

It localises to the synapse. Its subcellular location is the cell projection. The protein localises to the dendrite. The protein resides in the postsynaptic density. In terms of biological role, potent and specific inhibitor of CaM-kinase II (CAMK2). Plays a role in the maintenance of long-term retrieval-induced memory in response to contextual fear. Modulates blood pressure and vascular reactivity via regulation of CAMK2 activity in addition to regulation of left ventricular mass. Mediates the NLRP3 inflammasome in cardiomyocytes via acting as an inhibitor of the MAPK14/p38 and MAPK8/JNK pathways, thereby regulating ventricular remodeling and cardiac rhythm post-myocardial infarction. Negatively effects insulin sensitivity and promotes lipid formation in adipose tissues independent of CAMK2 signaling. This is Calcium/calmodulin-dependent protein kinase II inhibitor 1 (CAMK2N1) from Homo sapiens (Human).